The sequence spans 306 residues: Homeobox protein HMX3 (306 aa).

Residues 95-181 form a disordered region; sequence HTPRTEVPDK…DKKPCRKKKT (87 aa). Basic and acidic residues-rich tracts occupy residues 117 to 143 and 153 to 174; these read GERDSPDPIHPLKTELGAKESESKSPE and EEGKKDDSGEDWKKREDSPDKK. The segment at residues 178–237 is a DNA-binding region (homeobox); the sequence is KKKTRTVFSRSQVFQLESTFDMKRYLSSSERAGLAASLHLTETQVKIWFQNRRNKWKRQL.

This sequence belongs to the HMX homeobox family.

It localises to the nucleus. Its function is as follows. Transcription factor involved in specification of neuronal cell types and which is required for inner ear and hypothalamus development. Binds to the 5'-CAAGTG-3' core sequence. May act as a stage-specific inhibitor of anf1 in the anterior neural plate during the development. In Xenopus laevis (African clawed frog), this protein is Homeobox protein HMX3 (hmx3).